A 275-amino-acid chain; its full sequence is Adenylate kinase (275 aa).

54 to 59 contacts ATP; that stretch reads GAGKGT. An NMP region spans residues 74–103; sequence ATGDMLRSQVAKKTPLGREAKKIMDQGGLV. AMP-binding positions include threonine 75, arginine 80, 101-103, 130-133, and glutamine 137; these read GLV and GFPR. The tract at residues 171–208 is LID; that stretch reads GRLVHPASGRSYHRVFNPPKADMKDDITGEPLVSRSDD. Residues arginine 172 and 181-182 each bind ATP; that span reads SY. Positions 205 and 216 each coordinate AMP. Glutamine 244 contacts ATP.

The protein belongs to the adenylate kinase family. AK2 subfamily. In terms of assembly, monomer.

The protein localises to the cytoplasm. Its subcellular location is the cytosol. It is found in the mitochondrion intermembrane space. The catalysed reaction is AMP + ATP = 2 ADP. Functionally, catalyzes the reversible transfer of the terminal phosphate group between ATP and AMP. Plays an important role in cellular energy homeostasis and in adenine nucleotide metabolism. Adenylate kinase activity is critical for regulation of the phosphate utilization and the AMP de novo biosynthesis pathways. This Botryotinia fuckeliana (strain B05.10) (Noble rot fungus) protein is Adenylate kinase (adk1).